The chain runs to 316 residues: MKNFALIGAAGYIAPRHMRAIKDTGNCLVSAYDINDSVGIIDSISPQSEFFTEFEFFLDHASNLKRDSATALDYVSICSPNYLHYPHIAAGLRLGCDVICEKPLVPTPEMLDQLAVIERETDKRLYNILQLRHHQAIIALKDKVAREKSPHKYEVDLTYITSRGNWYLKSWKGDPRKSFGVATNIGVHFYDMLHFIFGKLQRNVVHFTSEYKAAGYLEYEQARVRWFLSVDANDLPESVKGKKPTYRSITVNGEEMEFSEGFTDLHTTSYEEILAGRGYGIDDARHCVETVNTIRSAVIVPASDNEGHPFVAALAR.

NAD(+) is bound by residues 11–13, 32–37, E55, 81–84, 101–102, Q130, and 171–172; these read GYI, YDINDS, NYLH, EK, and WK.

This sequence belongs to the Gfo/Idh/MocA family. As to quaternary structure, homotetramer.

It catalyses the reaction UDP-2-acetamido-2-deoxy-alpha-D-glucuronate + NAD(+) = UDP-2-acetamido-2-deoxy-alpha-D-ribo-hex-3-uluronate + NADH + H(+). The enzyme catalyses 2-hydroxyglutarate + NAD(+) = 2-oxoglutarate + NADH + H(+). The protein operates within bacterial outer membrane biogenesis; LPS O-antigen biosynthesis. In terms of biological role, plays a role in the biosynthesis of B-band O antigen for serotype O5. Catalyzes the NAD-dependent oxidation of UDP-N-acetylglucosaminuronic acid (UDP-D-GlcNAcA) to UDP-2-acetamido-2-deoxy-3-oxo-D-glucuronic acid (UDP-3-oxo-D-GlcNAcA). Cannot use UDP-GlcNAc or UDP-GalNAc as the nucleotide sugar substrate, and can use only poorly UDP-D-glucuronic acid (UDP-GlcA). Undergoes an NAD(+) recycling mechanism using 2-oxoglutarate as an oxidant. This is UDP-N-acetyl-2-amino-2-deoxy-D-glucuronate oxidase from Pseudomonas aeruginosa (strain ATCC 15692 / DSM 22644 / CIP 104116 / JCM 14847 / LMG 12228 / 1C / PRS 101 / PAO1).